Consider the following 251-residue polypeptide: Imidazole glycerol phosphate synthase subunit HisF (251 aa).

Residues Asp-11 and Asp-130 contribute to the active site.

It belongs to the HisA/HisF family. Heterodimer of HisH and HisF.

Its subcellular location is the cytoplasm. The catalysed reaction is 5-[(5-phospho-1-deoxy-D-ribulos-1-ylimino)methylamino]-1-(5-phospho-beta-D-ribosyl)imidazole-4-carboxamide + L-glutamine = D-erythro-1-(imidazol-4-yl)glycerol 3-phosphate + 5-amino-1-(5-phospho-beta-D-ribosyl)imidazole-4-carboxamide + L-glutamate + H(+). Its pathway is amino-acid biosynthesis; L-histidine biosynthesis; L-histidine from 5-phospho-alpha-D-ribose 1-diphosphate: step 5/9. In terms of biological role, IGPS catalyzes the conversion of PRFAR and glutamine to IGP, AICAR and glutamate. The HisF subunit catalyzes the cyclization activity that produces IGP and AICAR from PRFAR using the ammonia provided by the HisH subunit. This Chlorobaculum tepidum (strain ATCC 49652 / DSM 12025 / NBRC 103806 / TLS) (Chlorobium tepidum) protein is Imidazole glycerol phosphate synthase subunit HisF.